A 1286-amino-acid polypeptide reads, in one-letter code: ABC transporter B family member 1 (1286 aa).

A run of 2 helical transmembrane segments spans residues 42–62 (VLMG…PLFL) and 93–113 (FLVV…CWMW). Positions 44 to 333 (MGIGSVGAFV…SAPSMAAFAK (290 aa)) constitute an ABC transmembrane type-1 1 domain. Aspartate 139 serves as a coordination point for ATP. Transmembrane regions (helical) follow at residues 166 to 186 (LGNF…GFTA) and 187 to 207 (VWQL…IGGI). The N-linked (GlcNAc...) asparagine glycan is linked to asparagine 217. Helical transmembrane passes span 277–297 (ATYF…GYLV) and 301–321 (LTNG…GLAL). Tyrosine 286 serves as a coordination point for brassinolide. Residues 368–604 (VELKNVDFSY…GENGVYAKLI (237 aa)) enclose the ABC transporter 1 domain. Residues tyrosine 377, serine 379, arginine 380, glycine 408, lysine 409, serine 410, and threonine 411 each coordinate ATP. A disordered region spans residues 614–647 (AMSNARKSSARPSSARNSVSSPIMTRNSSYGRSP). The span at 616-635 (SNARKSSARPSSARNSVSSP) shows a compositional bias: low complexity. Asparagine 640 carries an N-linked (GlcNAc...) asparagine glycan. In terms of domain architecture, ABC transmembrane type-1 2 spans 700 to 988 (ALLGSVGSVI…TLTLAPDFIK (289 aa)). Transmembrane regions (helical) follow at residues 705–725 (VGSV…SAVL) and 745–765 (YLLI…HSFW). Asparagine 771 carries N-linked (GlcNAc...) asparagine glycosylation. Residue aspartate 793 coordinates ATP. A glycan (N-linked (GlcNAc...) asparagine) is linked at asparagine 797. Transmembrane regions (helical) follow at residues 821-843 (ISVI…VLQW), 845-867 (LALV…KMFM), 932-952 (VAQF…SWLV), and 967-987 (MVLM…PDFI). Residues tyrosine 941 and glutamate 978 each coordinate brassinolide. The ABC transporter 2 domain maps to 1024 to 1260 (VELKHIDFSY…HPDGIYARMI (237 aa)). The ATP site is built by tyrosine 1033, arginine 1036, glycine 1064, lysine 1065, and serine 1066. An interaction with FKBP42/TWD1 region spans residues 1049–1286 (ARAGKTLALV…SSSRVKEDDA (238 aa)).

It belongs to the ABC transporter superfamily. ABCB family. Multidrug resistance exporter (TC 3.A.1.201) subfamily. Interacts with 1-naphthylphthalamic acid (NPA) and FKBP42/TWD1. Ubiquitous, with high levels in peduncles. Mostly localized in young developing tissues, including meristems, as well as root and shoot apices.

It is found in the cell membrane. It catalyses the reaction (indol-3-yl)acetate(in) + ATP + H2O = (indol-3-yl)acetate(out) + ADP + phosphate + H(+). It carries out the reaction brassinolide(in) + ATP + H2O = brassinolide(out) + ADP + phosphate + H(+). The catalysed reaction is 24-epi-brassinolide(in) + ATP + H2O = 24-epi-brassinolide(out) + ADP + phosphate + H(+). The enzyme catalyses 24-epi-castasterone(in) + ATP + H2O = 24-epi-castasterone(out) + ADP + phosphate + H(+). It catalyses the reaction castasterone(in) + ATP + H2O = castasterone(out) + ADP + phosphate + H(+). Transport capacity is stimulated by the chaperone protein FKBP42/TWD1. Transport activity inhibited by 1-N-naphthylphthalamic acid (NPA), cyclopropyl propane dione (CPD), cyclosporin A, verapamil and quercetin. ATPase activity is specifically activated by bioactive brassinosteroids in a dose-dependent manner, including brassinolide (BL), 24-epiBL, 24-epicastasterone (24-epiCS) and castasterone-alkyne; BL binding leads to structural changes. Inhibited by vanadate. Brassinosteroid exporter that, in conjunction with ABCB19, supports the accumulation of exogenous brassinosteroids (BR) in the apoplast, thus promoting BR signaling initiation involving the specific receptor BRI1 and required for plant growth and stress responses. Auxin efflux transporter that acts as a negative regulator of light signaling to promote hypocotyl elongation. May contribute to the regulation of leaf position and morphology during PHOT1-mediated blue light responses involving auxin distribution, especially in low light fluence. Together with ABCB19 and in a FKBP42/TWD1-dependent manner, supports seed development by promoting stamen elongation and, to a lesser extent, anther dehiscence and pollen maturation, probably as auxin transporters. Mediates the accumulation of chlorophyll and anthocyanin, as well as the expression of genes in response to light. Participates directly in auxin efflux and thus regulates the polar (presumably basipetal) auxin transport (from root tips to root elongating zone). Also transports some auxin metabolites such as oxindoleacetic acid and indoleacetaldehyde. Involved in diverse auxin-mediated responses including gravitropism, phototropism and lateral root formation. Confers resistance to herbicides such as dicamba, pendimethalin, oryzalin, and monosodium acid methanearsonate (MSMA), but not to herbicides such as glyphosate, atrazine, bentazon and fluazifop-p-butyl. Also mediates resistance to xenobiotics such as cycloheximide and the cytokinin N6-(2-isopentenyl)adenine (2IP). This chain is ABC transporter B family member 1, found in Arabidopsis thaliana (Mouse-ear cress).